Consider the following 600-residue polypeptide: Proline--tRNA ligase (600 aa).

Belongs to the class-II aminoacyl-tRNA synthetase family. ProS type 1 subfamily. As to quaternary structure, homodimer.

It localises to the cytoplasm. It catalyses the reaction tRNA(Pro) + L-proline + ATP = L-prolyl-tRNA(Pro) + AMP + diphosphate. In terms of biological role, catalyzes the attachment of proline to tRNA(Pro) in a two-step reaction: proline is first activated by ATP to form Pro-AMP and then transferred to the acceptor end of tRNA(Pro). As ProRS can inadvertently accommodate and process non-cognate amino acids such as alanine and cysteine, to avoid such errors it has two additional distinct editing activities against alanine. One activity is designated as 'pretransfer' editing and involves the tRNA(Pro)-independent hydrolysis of activated Ala-AMP. The other activity is designated 'posttransfer' editing and involves deacylation of mischarged Ala-tRNA(Pro). The misacylated Cys-tRNA(Pro) is not edited by ProRS. In Synechococcus elongatus (strain ATCC 33912 / PCC 7942 / FACHB-805) (Anacystis nidulans R2), this protein is Proline--tRNA ligase.